The sequence spans 347 residues: Farnesyl pyrophosphate synthase ERG20 (347 aa).

Isopentenyl diphosphate-binding residues include Lys50, Arg53, and Gln88. Residues Asp95 and Asp99 each coordinate Mg(2+). Residue Arg104 participates in dimethylallyl diphosphate binding. Position 105 (Arg105) interacts with isopentenyl diphosphate. Dimethylallyl diphosphate-binding residues include Lys192, Thr193, Gln232, Lys249, and Lys258.

The protein belongs to the FPP/GGPP synthase family. Mg(2+) serves as cofactor.

It catalyses the reaction isopentenyl diphosphate + dimethylallyl diphosphate = (2E)-geranyl diphosphate + diphosphate. The enzyme catalyses isopentenyl diphosphate + (2E)-geranyl diphosphate = (2E,6E)-farnesyl diphosphate + diphosphate. Its pathway is isoprenoid biosynthesis; farnesyl diphosphate biosynthesis; farnesyl diphosphate from geranyl diphosphate and isopentenyl diphosphate: step 1/1. It functions in the pathway isoprenoid biosynthesis; geranyl diphosphate biosynthesis; geranyl diphosphate from dimethylallyl diphosphate and isopentenyl diphosphate: step 1/1. Functionally, farnesyl pyrophosphate synthase; part of the second module of ergosterol biosynthesis pathway that includes the middle steps of the pathway. ERG20 catalyzes the sequential condensation of isopentenyl pyrophosphate with dimethylallyl pyrophosphate, and then with the resultant geranylpyrophosphate to the ultimate product farnesyl pyrophosphate. The second module is carried out in the vacuole and involves the formation of farnesyl diphosphate, which is also an important intermediate in the biosynthesis of ubiquinone, dolichol, heme and prenylated proteins. Activity by the mevalonate kinase ERG12 (FG05912) first converts mevalonate into 5-phosphomevalonate. 5-phosphomevalonate is then further converted to 5-diphosphomevalonate by the phosphomevalonate kinase ERG8 (FG09764). The diphosphomevalonate decarboxylase ERG19 (FG10424) then produces isopentenyl diphosphate. The isopentenyl-diphosphate delta-isomerase IDI1 (FG09722) then catalyzes the 1,3-allylic rearrangement of the homoallylic substrate isopentenyl (IPP) to its highly electrophilic allylic isomer, dimethylallyl diphosphate (DMAPP). Finally the farnesyl diphosphate synthase ERG20 (FG06784) catalyzes the sequential condensation of isopentenyl pyrophosphate with dimethylallyl pyrophosphate, and then with the resultant geranylpyrophosphate to the ultimate product farnesyl pyrophosphate. This is Farnesyl pyrophosphate synthase ERG20 from Gibberella zeae (strain ATCC MYA-4620 / CBS 123657 / FGSC 9075 / NRRL 31084 / PH-1) (Wheat head blight fungus).